A 119-amino-acid chain; its full sequence is Large ribosomal subunit protein uL18 (119 aa).

It belongs to the universal ribosomal protein uL18 family. In terms of assembly, part of the 50S ribosomal subunit; part of the 5S rRNA/L5/L18/L25 subcomplex. Contacts the 5S and 23S rRNAs.

This is one of the proteins that bind and probably mediate the attachment of the 5S RNA into the large ribosomal subunit, where it forms part of the central protuberance. The sequence is that of Large ribosomal subunit protein uL18 from Xylella fastidiosa (strain M23).